The primary structure comprises 255 residues: Vitamin B12 import ATP-binding protein BtuD (255 aa).

Residues 2–240 (MHVKHIALGS…EGLAEVFQTQ (239 aa)) form the ABC transporter domain. 30-37 (GPNGSGKS) lines the ATP pocket.

It belongs to the ABC transporter superfamily. Vitamin B12 importer (TC 3.A.1.13.1) family. The complex is composed of two ATP-binding proteins (BtuD), two transmembrane proteins (BtuC) and a solute-binding protein (BtuF).

It localises to the cell inner membrane. It catalyses the reaction an R-cob(III)alamin(out) + ATP + H2O = an R-cob(III)alamin(in) + ADP + phosphate + H(+). Part of the ABC transporter complex BtuCDF involved in vitamin B12 import. Responsible for energy coupling to the transport system. This chain is Vitamin B12 import ATP-binding protein BtuD, found in Vibrio campbellii (strain ATCC BAA-1116).